A 126-amino-acid polypeptide reads, in one-letter code: Small ribosomal subunit protein uS13 (126 aa).

A disordered region spans residues 96–126 (LPVHGQRTHTNARTRKGPRRAIAGKKKAGKK).

Belongs to the universal ribosomal protein uS13 family. In terms of assembly, part of the 30S ribosomal subunit. Forms a loose heterodimer with protein S19. Forms two bridges to the 50S subunit in the 70S ribosome.

Functionally, located at the top of the head of the 30S subunit, it contacts several helices of the 16S rRNA. In the 70S ribosome it contacts the 23S rRNA (bridge B1a) and protein L5 of the 50S subunit (bridge B1b), connecting the 2 subunits; these bridges are implicated in subunit movement. Contacts the tRNAs in the A and P-sites. The sequence is that of Small ribosomal subunit protein uS13 from Frankia alni (strain DSM 45986 / CECT 9034 / ACN14a).